The primary structure comprises 544 residues: Lipid II flippase MurJ (544 aa).

A run of 14 helical transmembrane segments spans residues 21–41 (ILGMVYLIPFSIMVGATGGAL), 49–69 (YTLFLNIATMGFPAAVSKFVS), 90–110 (VMLVTGMIAFFILYLSAPMFA), 127–147 (VVYVIRMVSLALLVVPIMSLV), 169–189 (IVRIIFLLSATFLILKVFNGG), 191–211 (VIAVGYATFAALIGAFGGLVV), 241–261 (MFFELFSYAAPYVFVGLAIPL), 297–317 (LVMIPVSLATAFGLTLIPTIT), 338–358 (TILFLIIPAVVGISLLSGPTY), 375–395 (ILLWYSPVAILFSLFTVNAAI), 404–424 (FAVVSLVIGVVIKLVLNVPLI), 431–451 (GAILATALGYIASLLYGFIMI), 471–491 (VLSAIMGIAVKIVQWVLGFFI), and 500–520 (AAIVVVIAAAVGGAVYLYCGY).

It belongs to the polysaccharide synthase family.

The protein localises to the cell membrane. The protein operates within cell wall biogenesis; peptidoglycan biosynthesis. Its function is as follows. Involved in peptidoglycan biosynthesis. Transports lipid-linked peptidoglycan precursors from the inner to the outer leaflet of the cytoplasmic membrane. Not essential for growth. The protein is Lipid II flippase MurJ of Bacillus subtilis (strain 168).